A 354-amino-acid chain; its full sequence is Phenylalanine 4-monooxygenase, chloroplastic (354 aa).

Residues 1 to 60 (MAFPLQKTFLCSNGQSFPCSNGRSTSTLLASDLKFQRLNKPFILRVGSMQIRNSPKEHPR) constitute a chloroplast transit peptide. Fe cation is bound by residues His229, His234, and Glu274.

This sequence belongs to the biopterin-dependent aromatic amino acid hydroxylase family. In terms of assembly, forms monomers. The cofactor is Fe(2+).

The protein localises to the plastid. It localises to the chloroplast. It catalyses the reaction (6R)-L-erythro-5,6,7,8-tetrahydrobiopterin + L-phenylalanine + O2 = (4aS,6R)-4a-hydroxy-L-erythro-5,6,7,8-tetrahydrobiopterin + L-tyrosine. In terms of biological role, catalyzes the hydroxylation of L-phenylalanine to L-tyrosine. Does not seem to be tetrahydropterin-dependent and shows preference for 10-formyltetrahydrofolate as cosubstrate and electron donor. The sequence is that of Phenylalanine 4-monooxygenase, chloroplastic from Pinus taeda (Loblolly pine).